We begin with the raw amino-acid sequence, 469 residues long: 3-phosphoshikimate 1-carboxyvinyltransferase (469 aa).

Positions 21–45 (KDTILTHSDQPRPLQSRANGPLTGK) are disordered. Residues K52, S53, and R57 each coordinate 3-phosphoshikimate. K52 contacts phosphoenolpyruvate. G125 and R153 together coordinate phosphoenolpyruvate. 4 residues coordinate 3-phosphoshikimate: S199, Q201, D352, and K379. Q201 contacts phosphoenolpyruvate. D352 (proton acceptor) is an active-site residue. Residues R383 and R426 each coordinate phosphoenolpyruvate.

It belongs to the EPSP synthase family. As to quaternary structure, monomer.

Its subcellular location is the cytoplasm. It carries out the reaction 3-phosphoshikimate + phosphoenolpyruvate = 5-O-(1-carboxyvinyl)-3-phosphoshikimate + phosphate. It participates in metabolic intermediate biosynthesis; chorismate biosynthesis; chorismate from D-erythrose 4-phosphate and phosphoenolpyruvate: step 6/7. Functionally, catalyzes the transfer of the enolpyruvyl moiety of phosphoenolpyruvate (PEP) to the 5-hydroxyl of shikimate-3-phosphate (S3P) to produce enolpyruvyl shikimate-3-phosphate and inorganic phosphate. This Bradyrhizobium diazoefficiens (strain JCM 10833 / BCRC 13528 / IAM 13628 / NBRC 14792 / USDA 110) protein is 3-phosphoshikimate 1-carboxyvinyltransferase.